The chain runs to 2368 residues: Highly reducing polyketide synthase cla2 (2368 aa).

One can recognise a Ketosynthase family 3 (KS3) domain in the interval 10–434; the sequence is QIPIAIVGLG…GTNGLVVLEA (425 aa). Residues C182, H317, and H357 each act as for beta-ketoacyl synthase activity in the active site. The segment at 548–877 is malonyl-CoA:ACP transacylase (MAT) domain; it reads FVFTGQGAQW…RGQNALDTSL (330 aa). S638 serves as the catalytic For malonyltransferase activity. The segment at 936 to 1071 is N-terminal hotdog fold; the sequence is HSMIGLKQPM…GLVAIEYTNK (136 aa). A dehydratase (DH) domain region spans residues 936–1175; that stretch reads HSMIGLKQPM…AIFQSIFGST (240 aa). Positions 936–1255 constitute a PKS/mFAS DH domain; the sequence is HSMIGLKQPM…MTEPEVGDDA (320 aa). The active-site Proton acceptor; for dehydratase activity is the H968. A C-terminal hotdog fold region spans residues 1099–1255; it reads PLMIRREKFY…MTEPEVGDDA (157 aa). The active-site Proton donor; for dehydratase activity is the D1165. Positions 1655–1967 are enoylreductase (ER) domain; it reads GFLDSLQFIK…QGKHRGKLVL (313 aa). Residues 1991-2170 form a catalytic ketoreductase (KRc) domain region; that stretch reads ATYLIIGGLG…AVAVNLTIIR (180 aa). The region spanning 2283 to 2360 is the Carrier domain; it reads QASEIITEGL…VLAKTIASRS (78 aa). S2320 carries the post-translational modification O-(pantetheine 4'-phosphoryl)serine.

The protein operates within secondary metabolite biosynthesis. Functionally, highly reducing polyketide synthase; part of the gene cluster that mediates the biosynthesis of cladosporin, a tricyclic octaketide that acts as an antimalarial agent though inhibition of the Plasmodium falciparum lysyl-tRNA synthetase. The highly reducing polyketide synthase cla2 is responsible for biosynthesis up to the pentaketide stage, including of the tetrahydropyran (THP) ring, whereas the three subsequent ketide extensions with no reduction are catalyzed by the non-reducing polyketide synthase cla3. The chain is Highly reducing polyketide synthase cla2 from Cladosporium cladosporioides.